We begin with the raw amino-acid sequence, 886 residues long: Alanine--tRNA ligase (886 aa).

Residues H568, H572, C670, and H674 each coordinate Zn(2+).

Belongs to the class-II aminoacyl-tRNA synthetase family. Zn(2+) serves as cofactor.

It localises to the cytoplasm. The catalysed reaction is tRNA(Ala) + L-alanine + ATP = L-alanyl-tRNA(Ala) + AMP + diphosphate. In terms of biological role, catalyzes the attachment of alanine to tRNA(Ala) in a two-step reaction: alanine is first activated by ATP to form Ala-AMP and then transferred to the acceptor end of tRNA(Ala). Also edits incorrectly charged Ser-tRNA(Ala) and Gly-tRNA(Ala) via its editing domain. In Prochlorococcus marinus (strain NATL2A), this protein is Alanine--tRNA ligase.